Reading from the N-terminus, the 109-residue chain is Nucleoid-associated protein plu3840 (109 aa).

Disordered regions lie at residues 1–23 and 89–109; these read MFGK…KMQK and KEKM…KMPF.

The protein belongs to the YbaB/EbfC family. In terms of assembly, homodimer.

It localises to the cytoplasm. It is found in the nucleoid. Its function is as follows. Binds to DNA and alters its conformation. May be involved in regulation of gene expression, nucleoid organization and DNA protection. The chain is Nucleoid-associated protein plu3840 from Photorhabdus laumondii subsp. laumondii (strain DSM 15139 / CIP 105565 / TT01) (Photorhabdus luminescens subsp. laumondii).